We begin with the raw amino-acid sequence, 510 residues long: MPARDLLPDKSALLHGLSKYIENRTIYGNILIHKRLLEDLEREAKEGLVTAEIALDEVKRLKEISENLLVSFEIVNSENLHGSLNGVLRDYCLSRKCTIVTTDEIQKKLSESLNIDVVLLQPSQTELEIEKMFDETTMSVHLKEGVTPKAKKGKPGSWQFVELLSNPLTSTDIKRVVNEILSSVNYVKDSFIEIERKGSTIVQLGNYRVVIIRPPLSDGWEVTITRPVVKKKLEEYNMDEKLLKRLRDKAEGILIAGSPGMGKTTFAQALAEFYTRMNKVVKTIESPRDMHLPPEVTQYSKNYAEVGELHDILLLSRPDYTVYDEMRNDEDFKLYIDLRLAGIGMIGVVHATSPIDAIHRFINRIDIGTIPNILDTVVFINSGNVAKVYGLDITVKVPTGLKEADLARPVVEVKDLISDKAEYEIYVFGEQTMIVPVKNLQTNSTQRRLESMINNIIPSASISFENGEYIITIPRDEIGMFNKKVVSKLKKYEKKYKIKIRVRFPDEDTT.

Homohexamer. Interacts with Holliday junction resolvase Hjc, interacts with helicase Hjm (Hel308).

It carries out the reaction ATP + H2O = ADP + phosphate + H(+). Functionally, important for growth at low temperatures (less than 65 degrees Celsius in this organism). Promotes Holliday junction (HJ) branch migration and unwinds Y-shaped DNA (but not replication forks or dsDNA) in an ATP hydrolysis-dependent manner. Stimulates cleavage by HJ resolvase Hjc. Hjc, Hjm (Hel308) and PINA coordinate HJ migration and cleavage of replication forks in a coordinated way. Probably acts as an ATP-dependent pump that pulls DNA through the hexamer. This is Holliday junction branch migration ATPase PINA from Sulfolobus acidocaldarius (strain ATCC 33909 / DSM 639 / JCM 8929 / NBRC 15157 / NCIMB 11770).